Here is a 290-residue protein sequence, read N- to C-terminus: uncharacterized protein (290 aa).

Positions 161–216 form a coiled coil; that stretch reads SNQREVESLEQLVHEQLNKLNTESKMEFENRKNDTKNEVQQLSARIVELHNLLAVS. Residues 236–256 form a helical membrane-spanning segment; that stretch reads AGVVMAFTGFLVLVIPFGLGV.

The protein localises to the mitochondrion membrane. This is an uncharacterized protein from Schizosaccharomyces pombe (strain 972 / ATCC 24843) (Fission yeast).